Reading from the N-terminus, the 431-residue chain is 3-isopropylmalate dehydratase large subunit (431 aa).

Residues C300, C360, and C363 each coordinate [4Fe-4S] cluster.

The protein belongs to the aconitase/IPM isomerase family. LeuC type 2 subfamily. In terms of assembly, heterodimer of LeuC and LeuD. It depends on [4Fe-4S] cluster as a cofactor.

The catalysed reaction is (2R,3S)-3-isopropylmalate = (2S)-2-isopropylmalate. The protein operates within amino-acid biosynthesis; L-leucine biosynthesis; L-leucine from 3-methyl-2-oxobutanoate: step 2/4. Functionally, catalyzes the isomerization between 2-isopropylmalate and 3-isopropylmalate, via the formation of 2-isopropylmaleate. In Sulfurihydrogenibium sp. (strain YO3AOP1), this protein is 3-isopropylmalate dehydratase large subunit.